The primary structure comprises 367 residues: Leu/Ile/Val-binding protein (367 aa).

The first 23 residues, 1–23 (MNMKGKALLAGCIALSLSNMAFA), serve as a signal peptide directing secretion. C76 and C101 are disulfide-bonded.

This sequence belongs to the leucine-binding protein family.

It is found in the periplasm. In terms of biological role, this protein is a component of the leucine, isoleucine, valine, (threonine) transport system, which is one of the two periplasmic binding protein-dependent transport systems of the high-affinity transport of the branched-chain amino acids. The polypeptide is Leu/Ile/Val-binding protein (livJ) (Citrobacter freundii).